The chain runs to 371 residues: Chaperone protein DnaJ (371 aa).

In terms of domain architecture, J spans 5–70 (DYYEVLGVNR…QKRAAYDQYG (66 aa)). Positions 31–52 (KYHPDRNPDNPKAEESFKEAKE) are disordered. Over residues 32-52 (YHPDRNPDNPKAEESFKEAKE) the composition is skewed to basic and acidic residues. A CR-type zinc finger spans residues 132–210 (RTETKIRIPV…CQGAGRVKKH (79 aa)). The Zn(2+) site is built by Cys-145, Cys-148, Cys-162, Cys-165, Cys-184, Cys-187, Cys-198, and Cys-201. CXXCXGXG motif repeat units follow at residues 145 to 152 (CETCHGSG), 162 to 169 (CTTCGGHG), 184 to 191 (CPKCHGSG), and 198 to 205 (CPSCQGAG).

This sequence belongs to the DnaJ family. Homodimer. Zn(2+) serves as cofactor.

It localises to the cytoplasm. In terms of biological role, participates actively in the response to hyperosmotic and heat shock by preventing the aggregation of stress-denatured proteins and by disaggregating proteins, also in an autonomous, DnaK-independent fashion. Unfolded proteins bind initially to DnaJ; upon interaction with the DnaJ-bound protein, DnaK hydrolyzes its bound ATP, resulting in the formation of a stable complex. GrpE releases ADP from DnaK; ATP binding to DnaK triggers the release of the substrate protein, thus completing the reaction cycle. Several rounds of ATP-dependent interactions between DnaJ, DnaK and GrpE are required for fully efficient folding. Also involved, together with DnaK and GrpE, in the DNA replication of plasmids through activation of initiation proteins. The sequence is that of Chaperone protein DnaJ from Methylovorus sp. (strain SS1 / DSM 11726).